The primary structure comprises 178 residues: Colicin-A immunity protein (178 aa).

Residues 1–13 (MMNEHSIDTDNRK) are Cytoplasmic-facing. A helical membrane pass occupies residues 14-37 (ANNALYLFIIIGLIPLLCIFVVYY). The Periplasmic portion of the chain corresponds to 38–68 (KTPDALLLRKIATSTENLPSITSSYNPLMTK). Residues 69-89 (VMDIYCKTAPFLALILYILTF) form a helical membrane-spanning segment. Topologically, residues 90–105 (KIRKLINNTDRNTVLR) are cytoplasmic. A helical transmembrane segment spans residues 106–123 (SCLLSPLVYAAIVYLFCF). The Periplasmic segment spans residues 124-142 (RNFELTTAGRPVRLMATND). Residues 143-165 (ATLLLFYIGLYSIIFFTTYITLF) traverse the membrane as a helical segment. Residues 166–178 (TPVTAFKLLKKRQ) lie on the Cytoplasmic side of the membrane.

The protein resides in the cell inner membrane. Functionally, this protein is able to protect a cell, which harbors the plasmid ColA encoding colicin A, against colicin A. The protein is Colicin-A immunity protein (cai) of Citrobacter freundii.